The following is a 119-amino-acid chain: Protein yippee-like 1 (119 aa).

One can recognise a Yippee domain in the interval 19–116; sequence RTYSCIHCRA…IELAHMIKDN (98 aa). Zn(2+) contacts are provided by Cys-23, Cys-26, Cys-79, and Cys-82. The Nuclear localization signal signature appears at 99-104; that stretch reads KYKEGK.

This sequence belongs to the yippee family.

The protein localises to the nucleus. Functionally, may play a role in epithelioid conversion of fibroblasts. This chain is Protein yippee-like 1 (YPEL1), found in Chlorocebus aethiops (Green monkey).